Here is a 197-residue protein sequence, read N- to C-terminus: MKPMHPGGFLEVITGPMFAGKTTELIKRVERQIFAKRKAALFKPAIDNRYSEREVVAHNGLRYEAFVVPTTEKGVERIKEITLNEGYEVIGIDEVQFFPMSVVEALNELADQGIYVIASGLNLDFKGDPFPVTKELLVRADNIVYLTAVCTVCGKPATRSQRLIDGKPAPRNSPVILVGGRESYEARCREHHLVPDE.

Residues 15 to 22 (GPMFAGKT) and 93 to 96 (DEVQ) contribute to the ATP site. Glu94 acts as the Proton acceptor in catalysis. Zn(2+) contacts are provided by Cys150, Cys153, Cys188, and His191.

It belongs to the thymidine kinase family. In terms of assembly, homotetramer.

The protein resides in the cytoplasm. The enzyme catalyses thymidine + ATP = dTMP + ADP + H(+). In Thermococcus kodakarensis (strain ATCC BAA-918 / JCM 12380 / KOD1) (Pyrococcus kodakaraensis (strain KOD1)), this protein is Thymidine kinase.